A 388-amino-acid polypeptide reads, in one-letter code: Succinate--CoA ligase [ADP-forming] subunit beta (388 aa).

In terms of domain architecture, ATP-grasp spans 9–236; sequence KKLFAEHGVP…VAAVDPLEQK (228 aa). Residues K45, 52 to 54, E91, S94, and E99 each bind ATP; that span reads GRG. Residues N191 and D205 each contribute to the Mg(2+) site. Residues N256 and 318-320 each bind substrate; that span reads GIT.

It belongs to the succinate/malate CoA ligase beta subunit family. As to quaternary structure, heterotetramer of two alpha and two beta subunits. It depends on Mg(2+) as a cofactor.

It carries out the reaction succinate + ATP + CoA = succinyl-CoA + ADP + phosphate. The catalysed reaction is GTP + succinate + CoA = succinyl-CoA + GDP + phosphate. The protein operates within carbohydrate metabolism; tricarboxylic acid cycle; succinate from succinyl-CoA (ligase route): step 1/1. Succinyl-CoA synthetase functions in the citric acid cycle (TCA), coupling the hydrolysis of succinyl-CoA to the synthesis of either ATP or GTP and thus represents the only step of substrate-level phosphorylation in the TCA. The beta subunit provides nucleotide specificity of the enzyme and binds the substrate succinate, while the binding sites for coenzyme A and phosphate are found in the alpha subunit. This Frankia casuarinae (strain DSM 45818 / CECT 9043 / HFP020203 / CcI3) protein is Succinate--CoA ligase [ADP-forming] subunit beta.